We begin with the raw amino-acid sequence, 372 residues long: Aminomethyltransferase (372 aa).

Belongs to the GcvT family. The glycine cleavage system is composed of four proteins: P, T, L and H.

The enzyme catalyses N(6)-[(R)-S(8)-aminomethyldihydrolipoyl]-L-lysyl-[protein] + (6S)-5,6,7,8-tetrahydrofolate = N(6)-[(R)-dihydrolipoyl]-L-lysyl-[protein] + (6R)-5,10-methylene-5,6,7,8-tetrahydrofolate + NH4(+). Functionally, the glycine cleavage system catalyzes the degradation of glycine. This Prochlorococcus marinus (strain NATL2A) protein is Aminomethyltransferase.